We begin with the raw amino-acid sequence, 421 residues long: UDP-N-acetylglucosamine 1-carboxyvinyltransferase 2 (421 aa).

Position 22-23 (K22–N23) interacts with phosphoenolpyruvate. R95 provides a ligand contact to UDP-N-acetyl-alpha-D-glucosamine. The Proton donor role is filled by C119. C119 carries the post-translational modification 2-(S-cysteinyl)pyruvic acid O-phosphothioketal. UDP-N-acetyl-alpha-D-glucosamine is bound by residues R124–Q128, D308, and V330.

This sequence belongs to the EPSP synthase family. MurA subfamily.

It localises to the cytoplasm. It catalyses the reaction phosphoenolpyruvate + UDP-N-acetyl-alpha-D-glucosamine = UDP-N-acetyl-3-O-(1-carboxyvinyl)-alpha-D-glucosamine + phosphate. It participates in cell wall biogenesis; peptidoglycan biosynthesis. Cell wall formation. Adds enolpyruvyl to UDP-N-acetylglucosamine. In Staphylococcus haemolyticus (strain JCSC1435), this protein is UDP-N-acetylglucosamine 1-carboxyvinyltransferase 2.